The chain runs to 492 residues: Catalase isozyme 2 (492 aa).

Active-site residues include His-65 and Asn-138. Tyr-348 provides a ligand contact to heme.

Belongs to the catalase family. Homotetramer. The cofactor is heme.

The protein localises to the peroxisome. The enzyme catalyses 2 H2O2 = O2 + 2 H2O. Functionally, occurs in almost all aerobically respiring organisms and serves to protect cells from the toxic effects of hydrogen peroxide. The chain is Catalase isozyme 2 (CAT2) from Gossypium hirsutum (Upland cotton).